We begin with the raw amino-acid sequence, 932 residues long: Potassium voltage-gated channel subfamily KQT member 5 (932 aa).

At 1–125 the chain is on the cytoplasmic side; that stretch reads MPRHHAGGEE…YNVLERPRGW (125 aa). Serine 88 bears the Phosphoserine mark. A helical transmembrane segment spans residues 126–146; that stretch reads AFIYHAFVFLLVFGCLILSVF. The Extracellular portion of the chain corresponds to 147 to 156; sequence STIPEHTKLA. Residues 157 to 177 traverse the membrane as a helical segment; it reads SSCLLILEFVMIVVFGLEFII. Over 178 to 200 the chain is Cytoplasmic; it reads RIWSAGCCCRYRGWQGRLRFARK. Residues 201-221 form a helical membrane-spanning segment; the sequence is PFCVIDTIVLIASIAVVSAKT. Topologically, residues 222–229 are extracellular; sequence QGNIFATS. A helical; Voltage-sensor transmembrane segment spans residues 230-252; the sequence is ALRSLRFLQILRMVRMDRRGGTW. 2 residues coordinate a 1,2-diacyl-sn-glycero-3-phospho-(1D-myo-inositol-4,5-bisphosphate): arginine 248 and lysine 264. At 253–266 the chain is on the cytoplasmic side; sequence KLLGSVVYAHSKEL. Residues 267–287 traverse the membrane as a helical segment; the sequence is ITAWYIGFLVLIFSSFLVYLV. Over 288-298 the chain is Extracellular; the sequence is EKDANKEFSTY. The segment at residues 299–319 is an intramembrane region (pore-forming); sequence ADALWWGTITLTTIGYGDKTP. Over 320–325 the chain is Extracellular; it reads LTWLGR. Residues 326 to 346 form a helical membrane-spanning segment; that stretch reads LLSAGFALLGISFFALPAGIL. The Cytoplasmic segment spans residues 347–932; sequence GSGFALKVQE…ALSLPHVKLK (586 aa). A 1,2-diacyl-sn-glycero-3-phospho-(1D-myo-inositol-4,5-bisphosphate) is bound at residue lysine 361. The interval 370-378 is interaction with CALM; it reads AANLIQCVW. The segment at 404-465 is disordered; that stretch reads SPTKKEQGEA…GSPTKVQKSW (62 aa). Positions 431 to 440 are enriched in polar residues; the sequence is RGQSIKSRQA. Phosphoserine is present on serine 447. The interval 521 to 528 is interaction with CALM; sequence VIRAIRIM. Positions 655–678 are disordered; sequence SDYQSPVDSKDLSGSAQNSGCLSR. Serine 831 carries the post-translational modification Phosphoserine. Residues 876-885 show a composition bias toward acidic residues; sequence VGPEETETDT. Residues 876 to 919 are disordered; the sequence is VGPEETETDTFDAAPQPAREAAFASDSLRTGRSRSSQSICKAGE. The span at 888–899 shows a compositional bias: low complexity; the sequence is AAPQPAREAAFA. Residues 902–914 show a composition bias toward polar residues; it reads SLRTGRSRSSQSI.

Belongs to the potassium channel family. KQT (TC 1.A.1.15) subfamily. Kv7.5/KCNQ5 sub-subfamily. In terms of assembly, homotetramer; forms a functional homotetrameric channel resulting in the expression of a small M-current. Heterotetramer with KCNQ3; forms heterotetrameric M-channel responsible for the native M-current. Heterotetramer with KCNQ1; forms a functional voltage-gated potassium channel. Interacts (via C-terminus) with calmodulin/CALM1; forms a heterooctameric structure (with 4:4 KCNQ1:CALM stoichiometry); the interaction is calcium-independent, constitutive and participates in the channel function. As to expression, strongly expressed in brain and skeletal muscle. In brain, expressed in cerebral cortex, occipital pole, frontal lobe and temporal lobe. Lower levels in hippocampus and putamen. Low to undetectable levels in medulla, cerebellum and thalamus.

The protein resides in the cell membrane. It catalyses the reaction K(+)(in) = K(+)(out). With respect to regulation, phosphatidylinositol-4,5-bisphosphate (PIP2) is essential to activate KCNQ5 channel by inducing the coupling of the voltage-sensing domain (VSD) and the pore-forming domain (PD). Calcium suppresses KCNQ5 channel current through calcium-bound CALM C-terminus. Therefore CALM acts as calcium sensor that controls channel activity. Activated by niflumic acid and the anticonvulsant retigabine. Inhibited by barium, linopirdine, XE991 and tetraethylammonium (as homomer). Insensitive to tetraethylammonium in KCNQ3-KCNQ5 heteromers. In terms of biological role, pore-forming subunit of the voltage-gated potassium (Kv) channel broadly expressed in brain and involved in the regulation of neuronal excitability. Associates with KCNQ3/Kv7.3 pore-forming subunit to form a potassium channel which contributes to M-type current, a slowly activating and deactivating potassium conductance which plays a critical role in determining the subthreshold electrical excitability of neurons. Contributes, with other potassium channels, to the molecular diversity of a heterogeneous population of M-channels, varying in kinetic and pharmacological properties, which underlie this physiologically important current. Also forms a functional channel with KCNQ1/Kv7.1 subunit that may contribute to vasoconstriction and hypertension. Channel may be selectively permeable in vitro to other cations besides potassium, in decreasing order of affinity K(+) = Rb(+) &gt; Cs(+) &gt; Na(+). Similar to the native M-channel, KCNQ3-KCNQ5 potassium channel is suppressed by activation of the muscarinic acetylcholine receptor CHRM1. The sequence is that of Potassium voltage-gated channel subfamily KQT member 5 from Homo sapiens (Human).